We begin with the raw amino-acid sequence, 245 residues long: Polyhedrin (245 aa).

Belongs to the polyhedrin family.

In terms of biological role, major component of the virus occlusion bodies, which are large proteinaceous structures (polyhedra), that protect the virus from the outside environment for extended periods until they are ingested by insect larvae. In Lepidoptera (butterflies and moths), this protein is Polyhedrin (PH).